Consider the following 353-residue polypeptide: UPF0283 membrane protein YcjF (353 aa).

Helical transmembrane passes span 70 to 90 (MVMGGLALFGASVVGQGVQWT), 100 to 120 (VALGGCAAGALIIGAGVGSVV), and 213 to 233 (ESTLMIAVSPLALVDMAFIAW).

It belongs to the UPF0283 family.

It localises to the cell inner membrane. In Shigella boydii serotype 4 (strain Sb227), this protein is UPF0283 membrane protein YcjF.